The primary structure comprises 662 residues: PAN2-PAN3 deadenylation complex subunit PAN3 (662 aa).

2 disordered regions span residues 1-29 and 53-133; these read MASA…NAKD and DPHK…DTVT. The segment at 26 to 55 adopts a C3H1-type zinc-finger fold; it reads NAKDTLCRNITIYGRCRYEDKGCAFNHDPH. Residues 75–102 are compositionally biased toward low complexity; sequence SFTPSLLSSNGSSPTSTPATTKKMTTIS. The segment covering 115–133 has biased composition (polar residues); that stretch reads SVVSRSNASTPGLRQDTVT. A pseudokinase domain region spans residues 263 to 525; it reads QTLPNTQLPA…NIDVFITGIS (263 aa). Residues arginine 315, 364-371, and 425-426 each bind ATP; these read DYHPLSKT and SK. Positions 526–564 form a coiled coil; that stretch reads SQLMSTFDSALHLDDQLTSDLSRELENGRLVRLMAKLNF. The interval 565–662 is knob domain; sequence VNERPEYEHD…ALMKPARRMH (98 aa).

The protein belongs to the protein kinase superfamily. PAN3 family. As to quaternary structure, homodimer. Forms a heterotrimer with a catalytic subunit pan2 to form the poly(A)-nuclease (PAN) deadenylation complex. Interacts (via PAM-2 motif) with poly(A)-binding protein pab1 (via PABC domain), conferring substrate specificity of the enzyme complex.

It localises to the cytoplasm. Regulatory subunit of the poly(A)-nuclease (PAN) deadenylation complex, one of two cytoplasmic mRNA deadenylases involved in mRNA turnover. PAN specifically shortens poly(A) tails of RNA and the activity is stimulated by poly(A)-binding protein pab1. PAN deadenylation is followed by rapid degradation of the shortened mRNA tails by the CCR4-NOT complex. Deadenylated mRNAs are then degraded by two alternative mechanisms, namely exosome-mediated 3'-5' exonucleolytic degradation, or deadenylation-dependent mRNA decaping and subsequent 5'-3' exonucleolytic degradation by xrn1. May also be involved in post-transcriptional maturation of mRNA poly(A) tails. pan3 acts as a positive regulator for PAN activity, recruiting the catalytic subunit pan2 to mRNA via its interaction with RNA and with pab1. The chain is PAN2-PAN3 deadenylation complex subunit PAN3 from Aspergillus fumigatus (strain ATCC MYA-4609 / CBS 101355 / FGSC A1100 / Af293) (Neosartorya fumigata).